The following is a 132-amino-acid chain: Small ribosomal subunit protein bS16 (132 aa).

A compositionally biased stretch (basic and acidic residues) spans 82-107 (DSKVQSKKEHNANKVKKEVKKPEAKK). The segment at 82 to 132 (DSKVQSKKEHNANKVKKEVKKPEAKKAAASKPASKPSASKSASQKKTVSKK) is disordered. The segment covering 108–132 (AAASKPASKPSASKSASQKKTVSKK) has biased composition (low complexity).

It belongs to the bacterial ribosomal protein bS16 family.

The polypeptide is Small ribosomal subunit protein bS16 (Malacoplasma penetrans (strain HF-2) (Mycoplasma penetrans)).